Reading from the N-terminus, the 224-residue chain is UPF0758 protein SPO0054 (224 aa).

The region spanning 102 to 224 is the MPN domain; it reads VISSWDALLD…ELSFRAEGYL (123 aa). Zn(2+)-binding residues include His-173, His-175, and Asp-186. Positions 173-186 match the JAMM motif motif; it reads HNHPSGDPTPSQSD.

The protein belongs to the UPF0758 family.

This Ruegeria pomeroyi (strain ATCC 700808 / DSM 15171 / DSS-3) (Silicibacter pomeroyi) protein is UPF0758 protein SPO0054.